The chain runs to 709 residues: Methylmalonyl-CoA mutase (709 aa).

Substrate is bound by residues 73–77 (TIRQY), 183–185 (TIQ), Arg195, Lys222, His232, and 271–273 (RLS). The region spanning 579–709 (RPRMLVVKMG…ILDLIREARS (131 aa)) is the B12-binding domain. His592 is a binding site for adenosylcob(III)alamin.

The protein belongs to the methylmalonyl-CoA mutase family. As to quaternary structure, homodimer. Adenosylcob(III)alamin serves as cofactor.

The catalysed reaction is (R)-methylmalonyl-CoA = succinyl-CoA. It participates in metabolic intermediate metabolism; propanoyl-CoA degradation; succinyl-CoA from propanoyl-CoA: step 3/3. Functionally, radical enzyme that catalyzes the transformation of (2R)-methylmalonyl-CoA to succinyl-CoA. Is involved in the ethylmalonyl-CoA pathway for acetyl-CoA assimilation required for R.sphaeroides growth on acetate as sole carbon source. This chain is Methylmalonyl-CoA mutase, found in Cereibacter sphaeroides (strain ATCC 17023 / DSM 158 / JCM 6121 / CCUG 31486 / LMG 2827 / NBRC 12203 / NCIMB 8253 / ATH 2.4.1.) (Rhodobacter sphaeroides).